The sequence spans 206 residues: MAANKNKNQSSLVLHKVIMVGSGGVGKSALTLQFMYDEFVEDYEPTKADSYRKKVVLDGEEVQIDILDTAGQEDYAAIRDNYFRSGEGFLLVFSITEHESFTATAEFREQILRVKAEEDKIPLLIVGNKSDLEDRRQVPMDEARGKAEEWGVQYVETSAKTRANVDKVFFDLMREIRTKKMSENKDKNGKKSGKSKKGFKQRCCLL.

21–28 is a binding site for GTP; it reads GSGGVGKS. The Effector region signature appears at 43-51; it reads YEPTKADSY. GTP contacts are provided by residues 68–72 and 128–131; these read DTAGQ and NKSD. The segment covering 180 to 189 has biased composition (basic and acidic residues); that stretch reads KMSENKDKNG. A disordered region spans residues 180 to 206; it reads KMSENKDKNGKKSGKSKKGFKQRCCLL. The segment covering 190–200 has biased composition (basic residues); the sequence is KKSGKSKKGFK. Cys-203 carries the cysteine methyl ester modification. The S-geranylgeranyl cysteine moiety is linked to residue Cys-203. Positions 204 to 206 are cleaved as a propeptide — removed in mature form; it reads CLL.

Belongs to the small GTPase superfamily. Ras family. As to quaternary structure, interacts with ralbp1 and rap1gds1. Weakly expressed in adult tissues and highest levels were found in heart, brain and testes.

It localises to the cell membrane. It is found in the midbody. The catalysed reaction is GTP + H2O = GDP + phosphate + H(+). Multifunctional GTPase involved in a variety of cellular processes including gene expression, cell migration, cell proliferation, oncogenic transformation and membrane trafficking. Accomplishes its multiple functions by interacting with distinct downstream effectors. Acts as a GTP sensor for GTP-dependent exocytosis of dense core vesicles. Required both to stabilize the assembly of the exocyst complex and to localize functional exocyst complexes to the leading edge of migrating cells. Required for suppression of apoptosis. In late stages of cytokinesis, upon completion of the bridge formation between dividing cells, mediates exocyst recruitment to the midbody to drive abscission. Regulates the actin cytoskeleton to play a role in gastrulation or neurulation. During the cleavage stages, the GTP-bound form induces a cortical reaction that affects the localization of pigment granules. Activated by the FGF pathway via ras and ral-GDS, but independently of raf. Directs ralbp1 to the plasma membrane. Involved in ligand-dependent receptor mediated endocytosis of the EGF and insulin receptors. In Xenopus laevis (African clawed frog), this protein is Ras-related protein ralB-A (ralb-a).